Reading from the N-terminus, the 241-residue chain is Endodeoxyribonuclease NucC (241 aa).

Residues aspartate 73, glutamate 104, and lysine 106 contribute to the active site. Mg(2+)-binding residues include aspartate 73 and glutamate 104.

The protein belongs to the NucC endonuclease family. Self-oligomerizes. Forms homotrimers; in the presence of cAAA the trimers associate face-to-face to form homohexamers. The 2 cAAA-binding sites are on the exterior of the hexamer at the three-way junction, there are maximally 2 cyclic nucleotides per hexamer. The cofactor is Mg(2+).

Activated by cAAA and to a lesser extent cAA and cAAG; cAAA and cAA are products of its cognate CD-NTase. Cyclic nucleotide binding causes hexamerization. Cyclic nucleotide binding causes a series of shifts that enclose the cAAA molecule, enable hexamer formation and juxtapose pairs of active sites to allow dsDNA cleavage. Its function is as follows. Effector DNase of a CBASS antivirus system. CBASS (cyclic oligonucleotide-based antiphage signaling system) provides immunity against bacteriophage. The CD-NTase protein synthesizes cyclic nucleotides in response to infection; these serve as specific second messenger signals. The signals activate a diverse range of effectors, leading to bacterial cell death and thus abortive phage infection. A type III-C(AAA) CBASS system. Functionally, a cyclic nucleotide-activated dsDNase. In the presence of 3',3',3'-cyclic AMP-AMP-AMP (cAAA), and to a lesser extent 3',3',3'-cyclic AMP-AMP-GMP (cAAG) and cyclic-di-AMP (c-di-AMP), endonucleolytically degrades dsDNA. Binds one cAAA in a pocket on one surface of the trimer; cAAA binding promotes hexamerization, which is necessary for nuclease activation. Also binds c-diAMP or linear di-AMP with lower affinity. The nuclease digests dsDNA to about 50 bp lengths with a 2-base 3' overhang and a consensus recognition site of 5'-Axx|T-3'. DNA has been modeled to contact a pair of juxtaposed active sites (one from each layer of the hexamer), accounting for cleavage on both strands and the 2-base overhang. Protects E.coli strain JP313 against bacteriophage lambda cI- infection. When the cdnC-cap7-cap6-nucC operon is transformed into a susceptible strain it confers bacteriophage immunity. Mutations in the sensor (Cap7 also called HORMA) or effector proteins (CdnC, NucC) but not the disassembly protein (Cap6 also called Trip13) no longer confer immunity. The presence of the intact operon leads to culture collapse and cell death which occurs before the phage has finished its replication cycle, thus protecting non-infected bacteria by aborting the phage infection and preventing its propagation. This chain is Endodeoxyribonuclease NucC, found in Escherichia coli (strain MS 115-1).